Reading from the N-terminus, the 123-residue chain is Small ribosomal subunit protein uS12 (123 aa).

Residues 1–24 are disordered; it reads MPTINQLIRKERKKQVKKSKSPAL. Residues 10 to 20 show a composition bias toward basic residues; that stretch reads KERKKQVKKSK. Residue Asp-89 is modified to 3-methylthioaspartic acid.

The protein belongs to the universal ribosomal protein uS12 family. In terms of assembly, part of the 30S ribosomal subunit. Contacts proteins S8 and S17. May interact with IF1 in the 30S initiation complex.

Functionally, with S4 and S5 plays an important role in translational accuracy. In terms of biological role, interacts with and stabilizes bases of the 16S rRNA that are involved in tRNA selection in the A site and with the mRNA backbone. Located at the interface of the 30S and 50S subunits, it traverses the body of the 30S subunit contacting proteins on the other side and probably holding the rRNA structure together. The combined cluster of proteins S8, S12 and S17 appears to hold together the shoulder and platform of the 30S subunit. This is Small ribosomal subunit protein uS12 from Sulfurovum sp. (strain NBC37-1).